Consider the following 351-residue polypeptide: Anthranilate phosphoribosyltransferase (351 aa).

5-phospho-alpha-D-ribose 1-diphosphate is bound by residues G80, 83-84, T88, 90-93, 108-116, and S120; these read GD, NIST, and KHGNRSVTS. G80 provides a ligand contact to anthranilate. Mg(2+) is bound at residue S92. N111 contacts anthranilate. R166 contributes to the anthranilate binding site. Residues D229 and E230 each coordinate Mg(2+).

It belongs to the anthranilate phosphoribosyltransferase family. In terms of assembly, homodimer. Requires Mg(2+) as cofactor.

It carries out the reaction N-(5-phospho-beta-D-ribosyl)anthranilate + diphosphate = 5-phospho-alpha-D-ribose 1-diphosphate + anthranilate. Its pathway is amino-acid biosynthesis; L-tryptophan biosynthesis; L-tryptophan from chorismate: step 2/5. Its function is as follows. Catalyzes the transfer of the phosphoribosyl group of 5-phosphorylribose-1-pyrophosphate (PRPP) to anthranilate to yield N-(5'-phosphoribosyl)-anthranilate (PRA). This Chlorobium chlorochromatii (strain CaD3) protein is Anthranilate phosphoribosyltransferase.